The following is a 527-amino-acid chain: Protein PLASTID TRANSCRIPTIONALLY ACTIVE 12, chloroplastic (527 aa).

A chloroplast-targeting transit peptide spans 1–30; the sequence is MASISTTTWLYRGQVCTDSGKSSNCIVQRR. The PHYA-interacting region 1 (PIR1) stretch occupies residues 1–115; sequence MASISTTTWL…ASIPGEDYWP (115 aa). The tract at residues 89–188 is disordered; it reads SYMDSTSGKL…NDSSDGFVTY (100 aa). The span at 163–181 shows a compositional bias: acidic residues; that stretch reads TNDEVSDSEDSSEEEENDS. 2 consecutive short sequence motifs (nuclear localization signal) follow at residues 204–211 and 235–242; these read DKKLGRPH and WRKPEKEQ. The interval 252–352 is PHYA-interacting region 2 (PIR2); sequence DVETVFLKAM…EMFSHQTDRE (101 aa). Residues 458–471 show a composition bias toward acidic residues; sequence GENDDDEDDADVEK. The segment at 458-527 is disordered; it reads GENDDDEDDA…LMDFEEETDP (70 aa). Positions 485-504 are enriched in basic and acidic residues; it reads ETPELRTAKPKPKKEGRMSL. A compositionally biased stretch (acidic residues) spans 506–527; that stretch reads EAVDDAENLTDFLMDFEEETDP. Residues 512-520 carry the Required and sufficient for transcriptional transactivation activity and to trigger PIF proteins degradation motif; the sequence is ENLTDFLMD.

Component of the transcriptionally active chromosome (TAC) complexes. Interacts with PTAC14 and PTAC7. Binds directly to PTAC6/PAP8 in the nucleus. Interacts with MED14. Binds to SL1/MTERF3. Binds to photoactivated phytochromes (e.g. PHYA and PHYB) via their photosensory domains; these interactions stimulate its light-mediated accumulation. Associates, via its N-terminal region, with phytochrome-interacting factors (PIFs) including PIF1, PIF3, PIF4, PIF5, PIF6, BHLH72/PIF7, UNE10/PIF8 and PIL1. Binds to RAD4. Associates with MRL7/RCB. As to expression, mostly expressed in cotyledons, leaves, stems and flowers, but barely in roots.

It localises to the plastid. Its subcellular location is the chloroplast. It is found in the nucleus. In terms of biological role, involved in plastid gene expression. Acidic transcriptional coactivator necessary for the transactivation of many PIFs target genes (class B genes), particularly during the regulation of hypocotyl growth. Plays dual opposite roles in regulating hypocotyl growth, preventing it in red and far-red conditions, but promoting it otherwise. Required in the nucleus for the initiation of photomorphogenesis mediated by phytochromes (PHYs) (e.g. PHYA and PHYB) by mediating PHYs localization to photobodies, especially in response to red and far-red light, and implicating phytochrome nuclear bodies as sites of proteolysis for PHYs and PIFs proteins (e.g. PIF1 and PIF3). Acts downstream of PHYs and upstream of DET1. Involved in UV tolerance in both roots and hypocotyls, specifically in dark conditions. Element of a PIF4/HMR/MED14-dependent thermoresponsive process; acts as a PIF4 transcriptional coactivator to trigger the thermoresponsive growth-relevant genes (e.g. mainly involved in biosynthesis and signaling of the phytohormone auxin) and promote warm-temperature-dependent (e.g. 27 degrees Celsius) PIF4 and MED14 stabilization and accumulation, being more prominently involved in long days (LD) and continuous red light (Rc) than in short days (SD), thus modulating warm temperature elicitation of MED14-dependent thermomorphogenesis (e.g. hypocotyl elongation). The chain is Protein PLASTID TRANSCRIPTIONALLY ACTIVE 12, chloroplastic from Arabidopsis thaliana (Mouse-ear cress).